The sequence spans 322 residues: Ferrochelatase (322 aa).

Fe cation contacts are provided by His-194 and Glu-275.

It belongs to the ferrochelatase family.

It localises to the cytoplasm. The catalysed reaction is heme b + 2 H(+) = protoporphyrin IX + Fe(2+). The protein operates within porphyrin-containing compound metabolism; protoheme biosynthesis; protoheme from protoporphyrin-IX: step 1/1. Its function is as follows. Catalyzes the ferrous insertion into protoporphyrin IX. This Yersinia enterocolitica serotype O:8 / biotype 1B (strain NCTC 13174 / 8081) protein is Ferrochelatase.